The sequence spans 68 residues: Pantinin-3 (68 aa).

The N-terminal stretch at 1-23 (MKTQFAILLIALVLFQLLSQSDA) is a signal peptide. Leucine 36 bears the Leucine amide mark. A propeptide spanning residues 40-68 (GLNELDNLDELFDGEISQADIDFLKELMS) is cleaved from the precursor.

The protein belongs to the non-disulfide-bridged peptide (NDBP) superfamily. Short antimicrobial peptide (group 4) family. In terms of tissue distribution, expressed by the venom gland.

It is found in the secreted. Its subcellular location is the target cell membrane. Its function is as follows. Amphipathic peptide that possesses relatively strong activities against Gram-positive bacteria and a fungus, but has very weak antimicrobial activities against Gram-negative bacteria. Also exhibits mild hemolytic activities against human erythrocytes (16 uM induce 70% of hemolysis). Furthermore, this peptide potently inhibits the growth of vancomycin-resistant Enterococcus (VRE) S13, a pathogen that can cause a number of human infections. Minimal inhibitory concentration (MIC) are the following: 16 uM against S.aureus, 6 uM against B.magaterium, 8 uM against M.luteus, 4 uM against VRE, 12 uM against methicillin-resistant S.aureus, 36 uM against E.coli, &gt;87 uM against P.putida, 87 uM against K.oxytoca, &gt;87 uM against E.cloacae, 84 uM against S.enterica and 17 uM against the fungus C.tropicalis. In Pandinus imperator (Emperor scorpion), this protein is Pantinin-3.